The following is a 417-amino-acid chain: NADH-quinone oxidoreductase subunit D (417 aa).

Belongs to the complex I 49 kDa subunit family. NDH-1 is composed of 14 different subunits. Subunits NuoB, C, D, E, F, and G constitute the peripheral sector of the complex.

It is found in the cell inner membrane. The enzyme catalyses a quinone + NADH + 5 H(+)(in) = a quinol + NAD(+) + 4 H(+)(out). In terms of biological role, NDH-1 shuttles electrons from NADH, via FMN and iron-sulfur (Fe-S) centers, to quinones in the respiratory chain. The immediate electron acceptor for the enzyme in this species is believed to be ubiquinone. Couples the redox reaction to proton translocation (for every two electrons transferred, four hydrogen ions are translocated across the cytoplasmic membrane), and thus conserves the redox energy in a proton gradient. The sequence is that of NADH-quinone oxidoreductase subunit D from Ruthia magnifica subsp. Calyptogena magnifica.